The chain runs to 1675 residues: Clathrin heavy chain 1 (1675 aa).

N-acetylalanine is present on alanine 2. The segment at 2-479 is globular terminal domain; the sequence is AQILPIRFQE…VDPTLALSVY (478 aa). WD40-like repeat regions lie at residues 24–67, 68–107, 108–149, 150–195, 196–257, 258–301, and 302–330; these read NIGF…RPIS, ADSAIMNPASKVIALKAGKTLQIFNIEMKSKMKAHTMTDD, VTFW…SSLA, GCQI…QPIE, GHAA…PEAQ, NDFP…ISGE, and TIFVTAPHEATAGIIGVNRKGQVLSVCVE. Serine 67 carries the phosphoserine modification. A Phosphothreonine modification is found at threonine 105. Phosphotyrosine is present on tyrosine 184. Threonine 394 is modified (phosphothreonine). Residues 449-465 are binding site for the uncoating ATPase, involved in lattice disassembly; the sequence is EKWLKEDKLECSEELGD. The flexible linker stretch occupies residues 480-523; it reads LRANVPNKVIQCFAETGQVQKIVLYAKKVGYTPDWIFLLRNVMR. The tract at residues 524 to 634 is distal segment; sequence ISPDQGQQFA…RALEHFTDLY (111 aa). Positions 524–1675 are heavy chain arm; that stretch reads ISPDQGQQFA…QPQPGFGYSM (1152 aa). CHCR repeat units lie at residues 537–683, 686–828, 833–972, 979–1124, 1128–1269, 1274–1420, and 1423–1566; these read VQDE…QIWV, ASKY…SEDV, ILVV…PLID, LSET…VKEA, YIKA…FRLA, LHIV…LLLN, and LMVL…RECF. A Phosphotyrosine modification is found at tyrosine 634. The interval 639-1675 is proximal segment; it reads AVVHTHLLNP…QPQPGFGYSM (1037 aa). Lysine 737 is subject to N6-succinyllysine. At lysine 856 the chain carries N6-acetyllysine. The residue at position 899 (tyrosine 899) is a Phosphotyrosine. Serine 1167 bears the Phosphoserine mark. The residue at position 1206 (tyrosine 1206) is a Phosphotyrosine. The involved in binding clathrin light chain stretch occupies residues 1213–1522; the sequence is AAKLLYNNVS…YLFKGNNRWK (310 aa). At serine 1229 the chain carries Phosphoserine. Lysine 1441 is modified (N6-acetyllysine; alternate). Position 1441 is an N6-succinyllysine; alternate (lysine 1441). 2 positions are modified to phosphotyrosine: tyrosine 1477 and tyrosine 1487. Residue serine 1494 is modified to Phosphoserine. Lysine 1501 carries the N6-acetyllysine modification. The segment at 1550-1675 is trimerization; that stretch reads AEELLQWFLQ…QPQPGFGYSM (126 aa).

Belongs to the clathrin heavy chain family. In terms of assembly, clathrin triskelions, composed of 3 heavy chains and 3 light chains, are the basic subunits of the clathrin coat. In the presence of light chains, hub assembly is influenced by both the pH and the concentration of calcium. Interacts with HIP1. Interacts with DENND1A, DENND1B and DENND1C. Interacts with OCRL. Interacts with ERBB2. Interacts with FKBP6. Interacts with CKAP5 and TACC3 forming the TACC3/ch-TOG/clathrin complex located at spindle inter-microtubules bridges; the complex implicates clathrin triskelions; TACC3 and CLTC are proposed to form a composite microtubule interaction surface. Interacts with ATG16L1 (via N-terminus). Interacts with RFTN1; the interaction occurs in response to pathogens. Interacts with USP2 isoform 2. Interacts with TMEM106B (via N-terminus). Interacts with DNAJC6; this interaction produces a local change in heavy-chain contacts, creating a detectable global distortion of the clathrin coat and leads to the recruitment of HSPA8.

Its subcellular location is the cytoplasmic vesicle membrane. It is found in the membrane. The protein resides in the coated pit. The protein localises to the melanosome. It localises to the cytoplasm. Its subcellular location is the cytoskeleton. It is found in the spindle. In terms of biological role, clathrin is the major protein of the polyhedral coat of coated pits and vesicles. Two different adapter protein complexes link the clathrin lattice either to the plasma membrane or to the trans-Golgi network. Acts as a component of the TACC3/ch-TOG/clathrin complex proposed to contribute to stabilization of kinetochore fibers of the mitotic spindle by acting as inter-microtubule bridge. The TACC3/ch-TOG/clathrin complex is required for the maintenance of kinetochore fiber tension. Plays a role in early autophagosome formation. Interaction with DNAJC6 mediates the recruitment of HSPA8 to the clathrin lattice and creates local destabilization of the lattice promoting uncoating. The polypeptide is Clathrin heavy chain 1 (Rattus norvegicus (Rat)).